The primary structure comprises 154 residues: RxLR effector protein PexRD24 (154 aa).

Residues 1 to 22 (MHSSLLWLGAVVALLAVNNVTA) form the signal peptide. Positions 53-67 (RSLRAVETSEDEEER) match the RxLR-dEER motif. K138 is a short sequence motif (PP1c-binding motif).

The protein belongs to the RxLR effector family. In terms of assembly, interacts with the potato PP1c family proteins PP1c-1, PP1c-2 and PP1c-3.

It localises to the secreted. The protein resides in the host nucleus. It is found in the host nucleoplasm. Its subcellular location is the host nucleolus. Its function is as follows. Effector that interacts with isoforms of host protein phosphatase type 1c (PP1c), mimicking a regulatory subunit and causing their re-localization within the host nucleus. The holoenzymes formed with PP1c isoforms act to promote late blight by attenuating jasmonic acid (JA)- and salicylic acid (SA)-mediated transcriptional responses of the host plant. This is RxLR effector protein PexRD24 from Phytophthora infestans (strain T30-4) (Potato late blight agent).